The chain runs to 617 residues: Protein fem-1 homolog C (617 aa).

ANK repeat units follow at residues 2-31 (DLKT…KDDV), 40-70 (NGAT…SVEI), 82-111 (EGAP…SVNN), 115-144 (TNST…DLEV), 148-177 (HGHT…DVNR), 181-210 (KGNT…RMEK), and 213-242 (YGMT…TSKN). TPR repeat units follow at residues 245-279 (INAL…RHSD) and 338-371 (SYYI…QQNN). 2 ANK repeats span residues 481-523 (NNFS…DVNV) and 527-556 (EQNS…HFDS).

This sequence belongs to the fem-1 family. In terms of assembly, component of a CRL2 E3 ubiquitin-protein ligase complex, also named ECS (Elongin BC-CUL2/5-SOCS-box protein) complex.

Its pathway is protein modification; protein ubiquitination. Its function is as follows. Substrate-recognition component of a Cul2-RING (CRL2) E3 ubiquitin-protein ligase complex of the DesCEND (destruction via C-end degrons) pathway, which recognizes a C-degron located at the extreme C terminus of target proteins, leading to their ubiquitination and degradation. The C-degron recognized by the DesCEND pathway is usually a motif of less than ten residues and can be present in full-length proteins, truncated proteins or proteolytically cleaved forms. The CRL2(FEM1C) complex specifically recognizes proteins with an arginine at the C-terminus: recognizes and binds proteins ending with -Lys/Arg-Xaa-Arg and -Lys/Arg-Xaa-Xaa-Arg C-degrons, leading to their ubiquitination and degradation. This Xenopus laevis (African clawed frog) protein is Protein fem-1 homolog C.